The chain runs to 235 residues: Large ribosomal subunit protein uL1 (235 aa).

The protein belongs to the universal ribosomal protein uL1 family. As to quaternary structure, part of the 50S ribosomal subunit.

In terms of biological role, binds directly to 23S rRNA. The L1 stalk is quite mobile in the ribosome, and is involved in E site tRNA release. Protein L1 is also a translational repressor protein, it controls the translation of the L11 operon by binding to its mRNA. This Fervidobacterium nodosum (strain ATCC 35602 / DSM 5306 / Rt17-B1) protein is Large ribosomal subunit protein uL1.